The following is a 529-amino-acid chain: Bifunctional purine biosynthesis protein PurH (529 aa).

Positions M1–V148 constitute an MGS-like domain. The residue at position 287 (K287) is an N6-acetyllysine.

The protein belongs to the PurH family.

The enzyme catalyses (6R)-10-formyltetrahydrofolate + 5-amino-1-(5-phospho-beta-D-ribosyl)imidazole-4-carboxamide = 5-formamido-1-(5-phospho-D-ribosyl)imidazole-4-carboxamide + (6S)-5,6,7,8-tetrahydrofolate. It carries out the reaction IMP + H2O = 5-formamido-1-(5-phospho-D-ribosyl)imidazole-4-carboxamide. It participates in purine metabolism; IMP biosynthesis via de novo pathway; 5-formamido-1-(5-phospho-D-ribosyl)imidazole-4-carboxamide from 5-amino-1-(5-phospho-D-ribosyl)imidazole-4-carboxamide (10-formyl THF route): step 1/1. It functions in the pathway purine metabolism; IMP biosynthesis via de novo pathway; IMP from 5-formamido-1-(5-phospho-D-ribosyl)imidazole-4-carboxamide: step 1/1. The protein is Bifunctional purine biosynthesis protein PurH of Shigella dysenteriae serotype 1 (strain Sd197).